A 259-amino-acid polypeptide reads, in one-letter code: 5'-nucleotidase SurE (259 aa).

A divalent metal cation contacts are provided by D13, D14, S44, and N100.

It belongs to the SurE nucleotidase family. A divalent metal cation serves as cofactor.

It is found in the cytoplasm. The catalysed reaction is a ribonucleoside 5'-phosphate + H2O = a ribonucleoside + phosphate. In terms of biological role, nucleotidase that shows phosphatase activity on nucleoside 5'-monophosphates. The protein is 5'-nucleotidase SurE of Bacteroides thetaiotaomicron (strain ATCC 29148 / DSM 2079 / JCM 5827 / CCUG 10774 / NCTC 10582 / VPI-5482 / E50).